A 207-amino-acid chain; its full sequence is Thymidylate kinase (207 aa).

Glycine 7–serine 14 contacts ATP.

Belongs to the thymidylate kinase family.

It carries out the reaction dTMP + ATP = dTDP + ADP. Functionally, phosphorylation of dTMP to form dTDP in both de novo and salvage pathways of dTTP synthesis. The sequence is that of Thymidylate kinase from Pseudomonas putida (strain W619).